The chain runs to 1114 residues: Probable guanine nucleotide exchange factor MCF2L2 (1114 aa).

One can recognise a CRAL-TRIO domain in the interval 11-193 (PQELTRRLAT…ELGGTLEYRH (183 aa)). A Spectrin repeat occupies 323–428 (QHFEHDFCKA…KWDILGKSLE (106 aa)). The disordered stretch occupies residues 530–614 (QTRPVQPVAP…NPELEQQARL (85 aa)). Positions 546–559 (KWVSSKTSQPSTSV) are enriched in polar residues. A compositionally biased stretch (basic and acidic residues) spans 577–606 (LNSRGKEDDETKFEVKSEEIFESHHERGNP). Residues 619–822 (PRRRIIRDLL…EDLIKSCELA (204 aa)) form the DH domain. Residues 834 to 954 (DIGKLGKLLL…WFSEISKLLM (121 aa)) form the PH domain. The segment covering 962–975 (DQGNPQFEMSTSKG) has biased composition (polar residues). Residues 962 to 1114 (DQGNPQFEMS…LRPRTSAQES (153 aa)) are disordered. Basic and acidic residues predominate over residues 986–997 (NMERATTSKEDP). The segment covering 1017 to 1028 (TFEDCEGAEDME) has biased composition (acidic residues). 2 stretches are compositionally biased toward basic and acidic residues: residues 1043–1067 (DDSHETCSSKSAFLERGESSQGEKE) and 1074–1084 (TATRSTEEERA).

It belongs to the MCF2 family. Significantly expressed in brain and modestly in pancreas, brain and testis.

Probably functions as a guanine nucleotide exchange factor. The protein is Probable guanine nucleotide exchange factor MCF2L2 (MCF2L2) of Homo sapiens (Human).